Here is a 391-residue protein sequence, read N- to C-terminus: Phosphoglycerate kinase (391 aa).

Substrate is bound by residues 23-25, arginine 38, 61-64, arginine 117, and arginine 150; these read DFN and HLGK. ATP is bound by residues lysine 201, glycine 291, glutamate 322, and 348–351; that span reads GGDS.

The protein belongs to the phosphoglycerate kinase family. In terms of assembly, monomer.

Its subcellular location is the cytoplasm. The enzyme catalyses (2R)-3-phosphoglycerate + ATP = (2R)-3-phospho-glyceroyl phosphate + ADP. It participates in carbohydrate degradation; glycolysis; pyruvate from D-glyceraldehyde 3-phosphate: step 2/5. The chain is Phosphoglycerate kinase from Clostridium beijerinckii (strain ATCC 51743 / NCIMB 8052) (Clostridium acetobutylicum).